The chain runs to 117 residues: MSSNVPADMINLRLILVSGKTKEFLFSPNDSASDIAKHVYDNWPMDWEEEQVSSPNILRLIYQGRFLHGNVTLGALKLPFGKTTVMHLVARETLPEPNSQGQRNREKTGESNCCVIL.

The Ubiquitin-like domain occupies I10–L88. A lipid anchor (S-palmitoyl cysteine) is attached at C113. C114 is subject to Cysteine methyl ester. C114 is lipidated: S-geranylgeranyl cysteine. The propeptide at V115–L117 is removed in mature form.

It is found in the cell membrane. The protein is Ubiquitin-like protein 3 (UBL3) of Bos taurus (Bovine).